A 314-amino-acid chain; its full sequence is Olfactory receptor 1E2 (314 aa).

Topologically, residues 1-25 are extracellular; the sequence is MMGQNQTSISDFLLLGLPIQPEQQN. A glycan (N-linked (GlcNAc...) asparagine) is linked at Asn5. A helical transmembrane segment spans residues 26–49; that stretch reads LCYALFLAMYLTTLLGNLLIIVLI. Topologically, residues 50 to 57 are cytoplasmic; it reads RLDSHLHT. A helical transmembrane segment spans residues 58-79; the sequence is PMYLFLSNLSFSDLCFSSVTIP. Topologically, residues 80-100 are extracellular; it reads KLLQNMQNQDPSIPYADCLTQ. The cysteines at positions 97 and 189 are disulfide-linked. Residues 101–120 form a helical membrane-spanning segment; sequence MHFFLLFGDLESFLLVAMAY. The Cytoplasmic segment spans residues 121-139; the sequence is DRYVAICFPLHYTAIMSPM. A helical membrane pass occupies residues 140-158; that stretch reads LCLSVVALSWVLTTFHAML. Over 159 to 196 the chain is Extracellular; the sequence is HTLLMARLCFCADNVIPHFFCDMSALLKLACSDTRVNE. Residues 197-219 form a helical membrane-spanning segment; it reads WVIFIMGGLIVVIPFLLILGSYA. The Cytoplasmic portion of the chain corresponds to 220–236; sequence RIVSSILKVPSFKGICK. A helical transmembrane segment spans residues 237 to 260; sequence ALSTCGSHLSVVSLFYGTVIGLYL. The Extracellular portion of the chain corresponds to 261-272; that stretch reads CPSANSSTLKDT. A glycan (N-linked (GlcNAc...) asparagine) is linked at Asn265. A helical membrane pass occupies residues 273–292; sequence VMAMMYTVVTPMLNPFIYSL. The Cytoplasmic portion of the chain corresponds to 293–314; that stretch reads RNRDMKGALERVICKRKNPFLL.

Belongs to the G-protein coupled receptor 1 family.

It localises to the cell membrane. Odorant receptor. The sequence is that of Olfactory receptor 1E2 (OR1E2) from Pan troglodytes (Chimpanzee).